The chain runs to 149 residues: General odorant-binding protein 57c (149 aa).

Residues 1–16 (MLKLWLICILTVSVVS) form the signal peptide. 3 cysteine pairs are disulfide-bonded: C32–C70, C66–C117, and C106–C126.

Belongs to the PBP/GOBP family.

Functionally, present in the aqueous fluid surrounding olfactory sensory dendrites and are thought to aid in the capture and transport of hydrophobic odorants into and through this fluid. The sequence is that of General odorant-binding protein 57c from Drosophila melanogaster (Fruit fly).